We begin with the raw amino-acid sequence, 110 residues long: ATP-dependent Clp protease adapter protein ClpS 2 (110 aa).

A disordered region spans residues Met-1 to Pro-24. Polar residues predominate over residues Ser-8–Ile-19.

The protein belongs to the ClpS family. In terms of assembly, binds to the N-terminal domain of the chaperone ClpA.

Its function is as follows. Involved in the modulation of the specificity of the ClpAP-mediated ATP-dependent protein degradation. The polypeptide is ATP-dependent Clp protease adapter protein ClpS 2 (Bradyrhizobium diazoefficiens (strain JCM 10833 / BCRC 13528 / IAM 13628 / NBRC 14792 / USDA 110)).